A 373-amino-acid chain; its full sequence is Core trichothecene cluster (CTC) protein 14 (373 aa).

This sequence belongs to the TRI14 family.

Part of the core gene cluster that mediates the biosynthesis of trichothecenes, a very large family of chemically related bicyclic sesquiterpene compounds acting as mycotoxins, including T2-toxin. The biosynthesis of trichothecenes begins with the cyclization of farnesyl diphosphate to trichodiene and is catalyzed by the trichodiene synthase TRI5. Trichodiene undergoes a series of oxygenations catalyzed by the cytochrome P450 monooxygenase TRI4. TRI4 controls the addition of four oxygens at C-2, C-3, C-11, and the C-12, C-13-epoxide to form the intermediate isotrichotriol. Isotrichotriol then undergoes a non-enzymatic isomerization and cyclization to form isotrichodermol. During this process, the oxygen at the C-2 position becomes the pyran ring oxygen and the hydroxyl group at C-11 is lost. More complex type A trichothecenes are built by modifying isotrichodermol through a series of paired hydroxylation and acetylation or acylation steps. Isotrichodermol is converted to isotrichodermin by the acetyltransferase TRI101. TRI101 encodes a C-3 transacetylase that acts as a self-protection or resistance factor during biosynthesis and that the presence of a free C-3 hydroxyl group is a key component of Fusarium trichothecene phytotoxicity. A second hydroxyl group is added to C-15 by the trichothecene C-15 hydroxylase TRI11, producing 15-decalonectrin, which is then acetylated by TRI3, producing calonectrin. A third hydroxyl group is added at C-4 by the cytochrome P450 monooxygenase TRI13, converting calonectrin to 3,15-diacetoxyspirpenol, which is subsequently acetylated bythe acetyltransferase TRI7. A fourth hydroxyl group is added to C-8 by the cytochrome P450 monooxygenase TRI1, followed by the addition of an isovaleryl moiety by TRI16. Finally, the acetyl group is removed from the C-3 position by the trichothecene C-3 esterase TRI8 to produce T-2 toxin. In Fusarium sporotrichioides, this protein is Core trichothecene cluster (CTC) protein 14.